The chain runs to 430 residues: tRNA(Ile)-lysidine synthase (430 aa).

ATP is bound at residue 27 to 32 (SGGSDS).

It belongs to the tRNA(Ile)-lysidine synthase family.

It is found in the cytoplasm. The enzyme catalyses cytidine(34) in tRNA(Ile2) + L-lysine + ATP = lysidine(34) in tRNA(Ile2) + AMP + diphosphate + H(+). Ligates lysine onto the cytidine present at position 34 of the AUA codon-specific tRNA(Ile) that contains the anticodon CAU, in an ATP-dependent manner. Cytidine is converted to lysidine, thus changing the amino acid specificity of the tRNA from methionine to isoleucine. The protein is tRNA(Ile)-lysidine synthase of Rickettsia typhi (strain ATCC VR-144 / Wilmington).